Consider the following 1047-residue polypeptide: UPF0182 protein Mlut_14990 (1047 aa).

Composition is skewed to gly residues over residues 1–27 and 49–59; these read MSFGQGGGGPFGGPPRDGGGTAGGQSG and GPGGPFGGGGS. Residues 1–66 form a disordered region; that stretch reads MSFGQGGGGP…GGSSAARGRG (66 aa). Helical transmembrane passes span 71–91, 114–134, 168–188, 214–234, 266–286, 314–334, and 341–361; these read PSALVLTIIAVAVLVGLFVVF, VLAKGALFLIAGLGMALAVWL, LVFLGVPLVLGVFAGSTAMNG, FFMATLPFLTLVVGYLISVVL, AHIGITLAVFLLLQGVNFWLN, AILAVTAVIVAGLFVWTVVSG, and IGTAVLVITALVVGTAYPFIV. Disordered regions lie at residues 544-568, 941-965, and 1007-1047; these read GAPAVERDRPQTADSQEDTAYTFSG, GDSGAVTPEEKQAEAPAPGEKPTAP, and EALK…TPSG. The span at 555–565 shows a compositional bias: polar residues; sequence TADSQEDTAYT. A compositionally biased stretch (low complexity) spans 1015–1037; sequence ADDALGGDAPAQEQAPAEASPAP. Residues 1038–1047 show a composition bias toward pro residues; it reads SSSPSPTPSG.

This sequence belongs to the UPF0182 family.

It localises to the cell membrane. The polypeptide is UPF0182 protein Mlut_14990 (Micrococcus luteus (strain ATCC 4698 / DSM 20030 / JCM 1464 / CCM 169 / CCUG 5858 / IAM 1056 / NBRC 3333 / NCIMB 9278 / NCTC 2665 / VKM Ac-2230) (Micrococcus lysodeikticus)).